The following is a 328-amino-acid chain: PhoH-like protein (328 aa).

An ATP-binding site is contributed by 135–142 (GPAGTGKT).

Belongs to the PhoH family.

It localises to the cytoplasm. The polypeptide is PhoH-like protein (Synechocystis sp. (strain ATCC 27184 / PCC 6803 / Kazusa)).